A 350-amino-acid chain; its full sequence is MKVLRVNLDEKSYDIVIQKDLKDYFGEYIKTVFDGKKVAIITDDNLNDIYGEAIKKNIENEGFEVEVISVTPGEKSKSFSVLPGIYNKLLDFKLTRSDLIIALGGGVVGDLAGFVASTFLRGISFIQIPTSLLAQVDSSVGGKVAVDLERGKNLVGSFYHPELVLIDPNMLGTLPEKYFNDGLGEVIKYGCIKSKELFEKLEGFENKEDLKENIGEIIYECCNIKREVVENDEKDLGERMVLNFGHTLGHAIEQIYNYEIYSHGEAVAIGMNMISKIAEEKDLTKKGTAERIESLLKKYGLNTDVNIEDNGLAREAIKLDKKNLNGNLNVILLKDIGEGYIYNTTVEFFE.

NAD(+) is bound by residues 106–110, 130–131, K143, and K152; these read GVVGD and TS. Positions 185, 246, and 263 each coordinate Zn(2+).

It belongs to the sugar phosphate cyclases superfamily. Dehydroquinate synthase family. NAD(+) serves as cofactor. It depends on Co(2+) as a cofactor. Requires Zn(2+) as cofactor.

The protein localises to the cytoplasm. The enzyme catalyses 7-phospho-2-dehydro-3-deoxy-D-arabino-heptonate = 3-dehydroquinate + phosphate. Its pathway is metabolic intermediate biosynthesis; chorismate biosynthesis; chorismate from D-erythrose 4-phosphate and phosphoenolpyruvate: step 2/7. Functionally, catalyzes the conversion of 3-deoxy-D-arabino-heptulosonate 7-phosphate (DAHP) to dehydroquinate (DHQ). The chain is 3-dehydroquinate synthase from Clostridium perfringens (strain 13 / Type A).